The following is a 90-amino-acid chain: Secretory calcium-binding phosphoprotein proline-glutamine-rich 1 (90 aa).

An N-terminal signal peptide occupies residues 1–15 (MQLFLLAALLSAAAA).

As to expression, expressed in enamel organ.

The protein resides in the secreted. Functionally, tooth-associated epithelia protein that may participate in structuring the basal lamina at cell-tooth interface. The polypeptide is Secretory calcium-binding phosphoprotein proline-glutamine-rich 1 (Mus musculus (Mouse)).